Here is a 66-residue protein sequence, read N- to C-terminus: Large ribosomal subunit protein bL33c (66 aa).

It belongs to the bacterial ribosomal protein bL33 family.

Its subcellular location is the plastid. The protein localises to the chloroplast. This Welwitschia mirabilis (Tree tumbo) protein is Large ribosomal subunit protein bL33c.